A 255-amino-acid polypeptide reads, in one-letter code: Thiazole synthase (255 aa).

Residue Lys96 is the Schiff-base intermediate with DXP of the active site. 1-deoxy-D-xylulose 5-phosphate contacts are provided by residues Gly157, 183–184 (AG), and 205–206 (NT).

Belongs to the ThiG family. As to quaternary structure, homotetramer. Forms heterodimers with either ThiH or ThiS.

It is found in the cytoplasm. It catalyses the reaction [ThiS sulfur-carrier protein]-C-terminal-Gly-aminoethanethioate + 2-iminoacetate + 1-deoxy-D-xylulose 5-phosphate = [ThiS sulfur-carrier protein]-C-terminal Gly-Gly + 2-[(2R,5Z)-2-carboxy-4-methylthiazol-5(2H)-ylidene]ethyl phosphate + 2 H2O + H(+). It participates in cofactor biosynthesis; thiamine diphosphate biosynthesis. Its function is as follows. Catalyzes the rearrangement of 1-deoxy-D-xylulose 5-phosphate (DXP) to produce the thiazole phosphate moiety of thiamine. Sulfur is provided by the thiocarboxylate moiety of the carrier protein ThiS. In vitro, sulfur can be provided by H(2)S. This Geobacillus sp. (strain WCH70) protein is Thiazole synthase.